Here is a 197-residue protein sequence, read N- to C-terminus: Cytochrome c oxidase polypeptide 5, mitochondrial (197 aa).

The N-terminal 13 residues, 1-13, are a transit peptide targeting the mitochondrion; the sequence is MFLRSVTRAAARS. The Mitochondrial matrix portion of the chain corresponds to 14-129; the sequence is SAVPTTGLRS…KGENLKIFFK (116 aa). Residues 130–147 form a helical membrane-spanning segment; the sequence is VAQLTLVSFGIFYVIHLF. Topologically, residues 148–197 are mitochondrial intermembrane; that stretch reads AKPQPKTMTKEWQEASNEYAKQEKINPIYGISAEGYEGKGFVQSPPAEKQ.

Belongs to the cytochrome c oxidase IV family. Component of the cytochrome c oxidase (complex IV, CIV), a multisubunit enzyme composed of a catalytic core of 3 subunits and seevral supernumerary subunits. The complex exists as a monomer or a dimer and forms supercomplexes (SCs) in the inner mitochondrial membrane with ubiquinol-cytochrome c oxidoreductase (cytochrome b-c1 complex, complex III, CIII).

Its subcellular location is the mitochondrion inner membrane. Its pathway is energy metabolism; oxidative phosphorylation. Component of the cytochrome c oxidase, the last enzyme in the mitochondrial electron transport chain which drives oxidative phosphorylation. The respiratory chain contains 3 multisubunit complexes succinate dehydrogenase (complex II, CII), ubiquinol-cytochrome c oxidoreductase (cytochrome b-c1 complex, complex III, CIII) and cytochrome c oxidase (complex IV, CIV), that cooperate to transfer electrons derived from NADH and succinate to molecular oxygen, creating an electrochemical gradient over the inner membrane that drives transmembrane transport and the ATP synthase. Cytochrome c oxidase is the component of the respiratory chain that catalyzes the reduction of oxygen to water. Electrons originating from reduced cytochrome c in the intermembrane space (IMS) are transferred via the dinuclear copper A center (CU(A)) of subunit 2 and heme A of subunit 1 to the active site in subunit 1, a binuclear center (BNC) formed by heme A3 and copper B (CU(B)). The BNC reduces molecular oxygen to 2 water molecules using 4 electrons from cytochrome c in the IMS and 4 protons from the mitochondrial matrix. The polypeptide is Cytochrome c oxidase polypeptide 5, mitochondrial (cox5) (Aspergillus niger).